The primary structure comprises 437 residues: uncharacterized protein (437 aa).

A helical membrane pass occupies residues L47–A67.

The protein resides in the membrane. This is an uncharacterized protein from Methanocaldococcus jannaschii (strain ATCC 43067 / DSM 2661 / JAL-1 / JCM 10045 / NBRC 100440) (Methanococcus jannaschii).